Consider the following 1030-residue polypeptide: Exportin-T (1030 aa).

The protein belongs to the exportin family.

The protein resides in the nucleus. It localises to the cytoplasm. TRNA nucleus export receptor which facilitates tRNA translocation across the nuclear pore complex. Involved in pre-tRNA splicing, probably by affecting the interaction of pre-tRNA with splicing endonuclease. The sequence is that of Exportin-T (los1) from Aspergillus niger (strain ATCC MYA-4892 / CBS 513.88 / FGSC A1513).